The primary structure comprises 172 residues: Monopolar attachment protein 1 (172 aa).

The segment covering 15-30 (KKNKNPKISNSKKKNS) has biased composition (basic residues). The interval 15–43 (KKNKNPKISNSKKKNSTRPALQDKTNQTL) is disordered. Polar residues predominate over residues 31 to 43 (TRPALQDKTNQTL). Positions 100–102 (STP) match the POLO box domain (PBD)-binding motif.

In terms of assembly, interacts with rec8, Interacts with plo1.

The protein localises to the nucleus. Its subcellular location is the chromosome. The protein resides in the centromere. It is found in the kinetochore. Functionally, plays an important role in chromosome segregation during meiosis I by allowing meiotic rec8 to establish cohesion at the centromeric central core and thereby promote the side-by-side structure of kinetochores at meiosis I. Enables monopolar attachment during meiosis I. Required to facilitate kinetochore mono-orientation during meiosis I, when kinetochores on sister chromosomes face the same direction and are thus captured and pulled by spindle fibers from the same pole. Acts in collaboration with plo1. The chain is Monopolar attachment protein 1 (moa1) from Schizosaccharomyces pombe (strain 972 / ATCC 24843) (Fission yeast).